The sequence spans 363 residues: Probable iron/ascorbate oxidoreductase DDB_G0283291 (363 aa).

Residues 197 to 306 (IFNYPSIISS…RISFPLFFDP (110 aa)) enclose the Fe2OG dioxygenase domain. Fe cation is bound by residues histidine 230, aspartate 232, and histidine 286. Arginine 297 contributes to the 2-oxoglutarate binding site.

Belongs to the iron/ascorbate-dependent oxidoreductase family. The cofactor is Fe(2+).

This chain is Probable iron/ascorbate oxidoreductase DDB_G0283291, found in Dictyostelium discoideum (Social amoeba).